The chain runs to 972 residues: Isoleucine--tRNA ligase (972 aa).

The short motif at 63–73 is the 'HIGH' region element; the sequence is PYANGNIHIGH. L-isoleucyl-5'-AMP is bound at residue Glu603. The short motif at 644 to 648 is the 'KMSKS' region element; sequence KMSKS. Lys647 contacts ATP.

The protein belongs to the class-I aminoacyl-tRNA synthetase family. IleS type 1 subfamily. In terms of assembly, monomer.

The protein resides in the cytoplasm. The catalysed reaction is tRNA(Ile) + L-isoleucine + ATP = L-isoleucyl-tRNA(Ile) + AMP + diphosphate. Catalyzes the attachment of isoleucine to tRNA(Ile). As IleRS can inadvertently accommodate and process structurally similar amino acids such as valine, to avoid such errors it has two additional distinct tRNA(Ile)-dependent editing activities. One activity is designated as 'pretransfer' editing and involves the hydrolysis of activated Val-AMP. The other activity is designated 'posttransfer' editing and involves deacylation of mischarged Val-tRNA(Ile). This Brucella suis biovar 1 (strain 1330) protein is Isoleucine--tRNA ligase.